A 52-amino-acid polypeptide reads, in one-letter code: UPF0057 membrane protein YqaE (52 aa).

Transmembrane regions (helical) follow at residues 1-21 (MGFW…LLGK) and 23-43 (FGWA…PGLI).

It belongs to the UPF0057 (PMP3) family.

It localises to the cell membrane. In Escherichia coli O157:H7, this protein is UPF0057 membrane protein YqaE (yqaE).